The primary structure comprises 566 residues: Repressible alkaline phosphatase (566 aa).

Over residues M1–T11 the composition is skewed to polar residues. The disordered stretch occupies residues M1–R27. The Cytoplasmic segment spans residues M1–K33. The chain crosses the membrane as a helical span at residues I34–L59. Position 75 (D75) interacts with Mg(2+). D75 provides a ligand contact to Zn(2+). S123 functions as the Phosphoserine intermediate in the catalytic mechanism. S123 is subject to Phosphoserine. 2 residues coordinate Mg(2+): D174 and T176. A glycan (N-linked (GlcNAc...) asparagine) is linked at N268. E325 contacts Mg(2+). Positions 330, 334, 373, and 374 each coordinate Zn(2+). N-linked (GlcNAc...) asparagine glycosylation is present at N401. A Zn(2+)-binding site is contributed by H484.

This sequence belongs to the alkaline phosphatase family. Requires Mg(2+) as cofactor. Zn(2+) serves as cofactor.

The protein resides in the vacuole membrane. The protein localises to the cytoplasm. It catalyses the reaction a phosphate monoester + H2O = an alcohol + phosphate. The enzyme catalyses (2E,6E)-farnesyl diphosphate + H2O = (2E,6E)-farnesol + diphosphate. The catalysed reaction is beta-D-fructose 2,6-bisphosphate + H2O = beta-D-fructose 2-phosphate + phosphate. In terms of biological role, phosphatase with broad substrate specificity. A truncated (soluble) version of the protein is responsible for the production of (E,E)-farnesol from (E,E)-farnesyl diphosphate. Acts as a fructose-2,6-bisphosphate 6-phosphatase. This Saccharomyces cerevisiae (strain ATCC 204508 / S288c) (Baker's yeast) protein is Repressible alkaline phosphatase (PHO8).